The chain runs to 162 residues: UPF0114 protein Sden_0436 (162 aa).

3 helical membrane-spanning segments follow: residues 15-35 (IMAP…IKFF), 53-73 (LVLI…LIMV), and 136-156 (IMWY…MGYL).

It belongs to the UPF0114 family.

It localises to the cell membrane. This is UPF0114 protein Sden_0436 from Shewanella denitrificans (strain OS217 / ATCC BAA-1090 / DSM 15013).